The chain runs to 2948 residues: Transforming acidic coiled-coil-containing protein 2 (2948 aa).

The segment covering 1–30 (MGNENSTSDNQRTLSAQTPRSAQPPGNSQN) has biased composition (polar residues). 15 disordered regions span residues 1–304 (MGNE…TDDL), 314–333 (RSNS…QESC), 392–453 (AAGG…MPVS), 465–785 (LVGL…PQGE), 825–964 (SSEK…VSPP), 985–1050 (CTGQ…QPDS), 1062–1154 (ALAP…GEAT), 1243–1274 (AAQR…VGEP), 1296–1400 (QPGA…EQIA), 1427–1463 (PGEK…VTLL), 1493–1661 (ASDK…GERR), 1675–1705 (LGNQ…AGEA), 1741–1878 (VLPG…ESPT), 1907–2035 (HAGL…SSGT), and 2052–2460 (LEPR…ETPP). Positions 174–184 (GRERQPKEEGQ) are enriched in basic and acidic residues. 3 positions are modified to phosphoserine: S197, S201, and S269. Phosphothreonine is present on V325. At S493 the chain carries Phosphoserine. Positions 496 to 507 (ERGEHLNTEQSH) are enriched in basic and acidic residues. Residues S561, S571, and S575 each carry the phosphoserine modification. The segment covering 604–629 (SKRDPEVGKDELSKPSSDAESRDHPS) has biased composition (basic and acidic residues). S758 carries the phosphoserine modification. Low complexity predominate over residues 911–926 (SDTPTSSPTDMVWESS). At S962 the chain carries Phosphoserine. The segment covering 985 to 996 (CTGQGPNKSQQA) has biased composition (polar residues). S1025 is modified (phosphoserine). S1267 and S1313 each carry phosphoserine. Over residues 1348-1357 (ATAPGAGAKA) the composition is skewed to low complexity. The segment covering 1383–1400 (DPKQGTSGGVDTSSEQIA) has biased composition (polar residues). S1562 carries the post-translational modification Phosphoserine. Basic and acidic residues-rich tracts occupy residues 1801–1823 (DETH…RESP) and 1834–1854 (PKKD…RGAE). A compositionally biased stretch (low complexity) spans 1862 to 1873 (ADDIIQPAAPAD). Over residues 1939 to 1948 (PAKDLSRSSD) the composition is skewed to basic and acidic residues. The segment covering 1963–1976 (KAPPAPPPPPPEVI) has biased composition (pro residues). Position 2072 is a phosphoserine (S2072). The span at 2074 to 2102 (DSVPISKSTLSRSLSLQASDFDGASSSGN) shows a compositional bias: polar residues. The span at 2114–2124 (STGSSSASSTL) shows a compositional bias: low complexity. Positions 2125-2141 (KRTKKPRPPSLKKKQTT) are enriched in basic residues. Residues S2161 and S2226 each carry the phosphoserine modification. At T2246 the chain carries Phosphothreonine. At S2256 the chain carries Phosphoserine. Residues 2265-2275 (LEFDYSEDKSS) are compositionally biased toward basic and acidic residues. Over residues 2288-2305 (KIGKKPVAKMPLRRPKMK) the composition is skewed to basic residues. In terms of domain architecture, SPAZ spans 2315 to 2403 (PASPPRSPAE…SPASFEIPAS (89 aa)). 7 positions are modified to phosphoserine: S2317, S2321, S2359, S2389, S2392, S2394, and S2403. A compositionally biased stretch (polar residues) spans 2348-2368 (NPFSSTSKMQESPKLPQQSYN). The span at 2382–2395 (KTSSKTPSSPSKSP) shows a compositional bias: low complexity. A phosphothreonine mark is found at T2430, T2451, T2455, and T2458. A phosphoserine mark is found at S2512 and S2534. T2553 carries the phosphothreonine modification. The segment at 2555-2577 (QESPVKSSPVRMSESPTPCSGSS) is disordered. Phosphoserine occurs at positions 2557 and 2569. Residues 2568–2577 (ESPTPCSGSS) are compositionally biased toward polar residues. A Phosphothreonine modification is found at T2625. 2 coiled-coil regions span residues 2675-2703 (AQKL…LASR) and 2746-2947 (DLDS…KMGK).

The protein belongs to the TACC family. As to quaternary structure, interacts with CCDC100/CEP120. Interacts with microtubules. Interacts with YEATS4, GCN5L2 and PCAF. Post-translationally, phosphorylated by TTK; which is required for localization in centrosome. As to expression, strongly expressed in heart, skeletal muscle, brain, prostate, thyroid and trachea.

The protein localises to the cytoplasm. It is found in the nucleus. It localises to the cytoskeleton. Its subcellular location is the microtubule organizing center. The protein resides in the centrosome. Functionally, plays a role in the microtubule-dependent coupling of the nucleus and the centrosome. Involved in the processes that regulate centrosome-mediated interkinetic nuclear migration (INM) of neural progenitors. May play a role in organizing centrosomal microtubules. May act as a tumor suppressor protein. May represent a tumor progression marker. This is Transforming acidic coiled-coil-containing protein 2 (TACC2) from Homo sapiens (Human).